Here is a 284-residue protein sequence, read N- to C-terminus: Ribosomal RNA small subunit methyltransferase A (284 aa).

S-adenosyl-L-methionine contacts are provided by Asn-27, Leu-29, Gly-54, Glu-75, Asp-100, and Asn-125.

It belongs to the class I-like SAM-binding methyltransferase superfamily. rRNA adenine N(6)-methyltransferase family. RsmA subfamily.

The protein localises to the cytoplasm. The enzyme catalyses adenosine(1518)/adenosine(1519) in 16S rRNA + 4 S-adenosyl-L-methionine = N(6)-dimethyladenosine(1518)/N(6)-dimethyladenosine(1519) in 16S rRNA + 4 S-adenosyl-L-homocysteine + 4 H(+). Functionally, specifically dimethylates two adjacent adenosines (A1518 and A1519) in the loop of a conserved hairpin near the 3'-end of 16S rRNA in the 30S particle. May play a critical role in biogenesis of 30S subunits. This chain is Ribosomal RNA small subunit methyltransferase A, found in Protochlamydia amoebophila (strain UWE25).